Reading from the N-terminus, the 150-residue chain is SsrA-binding protein (150 aa).

It belongs to the SmpB family.

The protein localises to the cytoplasm. Its function is as follows. Required for rescue of stalled ribosomes mediated by trans-translation. Binds to transfer-messenger RNA (tmRNA), required for stable association of tmRNA with ribosomes. tmRNA and SmpB together mimic tRNA shape, replacing the anticodon stem-loop with SmpB. tmRNA is encoded by the ssrA gene; the 2 termini fold to resemble tRNA(Ala) and it encodes a 'tag peptide', a short internal open reading frame. During trans-translation Ala-aminoacylated tmRNA acts like a tRNA, entering the A-site of stalled ribosomes, displacing the stalled mRNA. The ribosome then switches to translate the ORF on the tmRNA; the nascent peptide is terminated with the 'tag peptide' encoded by the tmRNA and targeted for degradation. The ribosome is freed to recommence translation, which seems to be the essential function of trans-translation. This is SsrA-binding protein from Nitratiruptor sp. (strain SB155-2).